Consider the following 655-residue polypeptide: UvrABC system protein B (655 aa).

The region spanning 25 to 181 (DGINKGEKEQ…IRKLVFMQYE (157 aa)) is the Helicase ATP-binding domain. 38 to 45 (GVTGSGKT) is a binding site for ATP. The short motif at 91-114 (YYDYYQPEAYVPRTDTFIDKESSV) is the Beta-hairpin element. In terms of domain architecture, Helicase C-terminal spans 428 to 590 (QVEDLLGEVK…IVPKTTKRAL (163 aa)). The region spanning 615–650 (RLLISDLENDMKEAAAKLDFERAASLRDQIATLKGL) is the UVR domain.

Belongs to the UvrB family. As to quaternary structure, forms a heterotetramer with UvrA during the search for lesions. Interacts with UvrC in an incision complex.

The protein resides in the cytoplasm. The UvrABC repair system catalyzes the recognition and processing of DNA lesions. A damage recognition complex composed of 2 UvrA and 2 UvrB subunits scans DNA for abnormalities. Upon binding of the UvrA(2)B(2) complex to a putative damaged site, the DNA wraps around one UvrB monomer. DNA wrap is dependent on ATP binding by UvrB and probably causes local melting of the DNA helix, facilitating insertion of UvrB beta-hairpin between the DNA strands. Then UvrB probes one DNA strand for the presence of a lesion. If a lesion is found the UvrA subunits dissociate and the UvrB-DNA preincision complex is formed. This complex is subsequently bound by UvrC and the second UvrB is released. If no lesion is found, the DNA wraps around the other UvrB subunit that will check the other stand for damage. This is UvrABC system protein B from Methanobrevibacter smithii (strain ATCC 35061 / DSM 861 / OCM 144 / PS).